Consider the following 378-residue polypeptide: 3-dehydroquinate synthase (378 aa).

Residues 115–119, 139–140, lysine 152, and lysine 161 each bind NAD(+); these read GVVGD and TS. Positions 194, 256, and 275 each coordinate Zn(2+).

This sequence belongs to the sugar phosphate cyclases superfamily. Dehydroquinate synthase family. It depends on Co(2+) as a cofactor. Zn(2+) is required as a cofactor. NAD(+) serves as cofactor.

It localises to the cytoplasm. The catalysed reaction is 7-phospho-2-dehydro-3-deoxy-D-arabino-heptonate = 3-dehydroquinate + phosphate. It functions in the pathway metabolic intermediate biosynthesis; chorismate biosynthesis; chorismate from D-erythrose 4-phosphate and phosphoenolpyruvate: step 2/7. Catalyzes the conversion of 3-deoxy-D-arabino-heptulosonate 7-phosphate (DAHP) to dehydroquinate (DHQ). The protein is 3-dehydroquinate synthase of Brucella canis (strain ATCC 23365 / NCTC 10854 / RM-666).